The chain runs to 65 residues: MAVQKSRKTPSKRGMRRSHNALVKSTLSEDQETGEIHLRHHITTDGFYHGKKIINKVQNIQKINA.

The span at 1–19 (MAVQKSRKTPSKRGMRRSH) shows a compositional bias: basic residues. A disordered region spans residues 1 to 32 (MAVQKSRKTPSKRGMRRSHNALVKSTLSEDQE).

The protein belongs to the bacterial ribosomal protein bL32 family.

This is Large ribosomal subunit protein bL32 from Vesicomyosocius okutanii subsp. Calyptogena okutanii (strain HA).